Here is a 153-residue protein sequence, read N- to C-terminus: Ubiquitin-conjugating enzyme E2 13 (153 aa).

A UBC core domain is found at 3–149 (SLPKRIIKET…AREWTKLYAK (147 aa)). The Glycyl thioester intermediate role is filled by cysteine 87. Lysine 92 participates in a covalent cross-link: Glycyl lysine isopeptide (Lys-Gly) (interchain with G-Cter in ubiquitin).

It belongs to the ubiquitin-conjugating enzyme family. In terms of assembly, heterodimer with MMS2.

It catalyses the reaction S-ubiquitinyl-[E1 ubiquitin-activating enzyme]-L-cysteine + [E2 ubiquitin-conjugating enzyme]-L-cysteine = [E1 ubiquitin-activating enzyme]-L-cysteine + S-ubiquitinyl-[E2 ubiquitin-conjugating enzyme]-L-cysteine.. It participates in protein modification; protein ubiquitination. Functionally, has a role in the DNA error-free postreplication repair (PRR) pathway. The UBC13/MMS2 heterodimer catalyzes the synthesis of non-canonical poly-ubiquitin chains that are linked through 'Lys-63'. The sequence is that of Ubiquitin-conjugating enzyme E2 13 (UBC13) from Saccharomyces cerevisiae (strain ATCC 204508 / S288c) (Baker's yeast).